Reading from the N-terminus, the 1080-residue chain is Putative bifunctional amine oxidase DDB_G0291301 (1080 aa).

The segment at 1–450 (MREFLKDDYD…TIAKSTVPTN (450 aa)) is putative sarcosine oxidase. 10 to 40 (DVIVCGGGPVGLATAYRCAKAGKKVLCLEKS) contacts FAD. A disordered region spans residues 445 to 464 (STVPTNQSSNPDGASSTAPT). Residues 450–1080 (NQSSNPDGAS…NTAASIGGLK (631 aa)) are putative L-amino-acid oxidase. A helical membrane pass occupies residues 508 to 528 (VGIIGAGMAGLYAAMILQDLG). Residues Glu-535, Arg-544, and 563 to 564 (GA) each bind FAD. Tyr-886 lines the substrate pocket. Residues Glu-978 and 987–990 (VIGS) contribute to the FAD site.

In the N-terminal section; belongs to the MSOX/MTOX family. The protein in the C-terminal section; belongs to the flavin monoamine oxidase family. It depends on FAD as a cofactor.

Its subcellular location is the membrane. The enzyme catalyses sarcosine + O2 + H2O = formaldehyde + glycine + H2O2. It catalyses the reaction L-pipecolate + O2 = L-1-piperideine-6-carboxylate + H2O2 + H(+). It carries out the reaction an L-alpha-amino acid + O2 + H2O = a 2-oxocarboxylate + H2O2 + NH4(+). Its function is as follows. Catalyzes an oxidative deamination of predominantly hydrophobic and aromatic L-amino acids. Metabolizes sarcosine, L-pipecolic acid and L-proline. This is Putative bifunctional amine oxidase DDB_G0291301 from Dictyostelium discoideum (Social amoeba).